Consider the following 289-residue polypeptide: tRNA pseudouridine synthase B (289 aa).

Catalysis depends on Asp-38, which acts as the Nucleophile.

Belongs to the pseudouridine synthase TruB family. Type 1 subfamily.

It carries out the reaction uridine(55) in tRNA = pseudouridine(55) in tRNA. Its function is as follows. Responsible for synthesis of pseudouridine from uracil-55 in the psi GC loop of transfer RNAs. This Clostridium kluyveri (strain ATCC 8527 / DSM 555 / NBRC 12016 / NCIMB 10680 / K1) protein is tRNA pseudouridine synthase B.